A 280-amino-acid chain; its full sequence is Octanoyltransferase LIP2p2, chloroplastic (280 aa).

A chloroplast-targeting transit peptide spans 1 to 34; the sequence is MVFSVATSSVTNPKLHHHHHLSDFNRNRVSTSLK. Positions 81 to 270 constitute a BPL/LPL catalytic domain; the sequence is QECSDSLIIL…EFSEVFQLQM (190 aa). Substrate-binding positions include 123–130, 191–193, and 204–206; these read RGGEVTYH, AIG, and GLA. The Acyl-thioester intermediate role is filled by cysteine 222.

The protein belongs to the LipB family. Expressed in roots, leaves, cauline leaves, stems, siliques and flowers.

The protein resides in the plastid. It localises to the chloroplast. It catalyses the reaction octanoyl-[ACP] + L-lysyl-[protein] = N(6)-octanoyl-L-lysyl-[protein] + holo-[ACP] + H(+). The protein operates within protein modification; protein lipoylation via endogenous pathway; protein N(6)-(lipoyl)lysine from octanoyl-[acyl-carrier-protein]: step 1/2. Catalyzes the transfer of endogenously produced octanoic acid from octanoyl-acyl-carrier-protein onto the lipoyl domains of lipoate-dependent enzymes. Lipoyl-ACP can also act as a substrate although octanoyl-ACP is likely to be the physiological substrate. Together with LIP1P is essential for de novo plastidial protein lipoylation during seed development. Acts redundantly with LIP2P. This is Octanoyltransferase LIP2p2, chloroplastic from Arabidopsis thaliana (Mouse-ear cress).